The chain runs to 279 residues: Movement protein (279 aa).

The disordered stretch occupies residues 246–279; the sequence is SESEELNVESPPAAIGSSSASRSEAFRPQVVNGL. The segment covering 254–268 has biased composition (low complexity); the sequence is ESPPAAIGSSSASRS.

It belongs to the cucumovirus movement protein family.

It localises to the host cell junction. The protein localises to the host plasmodesma. Its function is as follows. Transports viral genome to neighboring plant cells directly through plasmosdesmata, without any budding. The movement protein allows efficient cell to cell propagation, by bypassing the host cell wall barrier. Acts by forming a tubular structure at the host plasmodesmata, enlarging it enough to allow free passage of virion capsids. This is Movement protein from Cucumis sativus (Cucumber).